Consider the following 508-residue polypeptide: Photosystem II CP47 reaction center protein (508 aa).

The next 6 membrane-spanning stretches (helical) occupy residues 21 to 36 (SVHI…WAGS), 101 to 115 (IVFS…IWHW), 140 to 156 (GIHL…FGAF), 203 to 218 (IAAG…FHLS), 237 to 252 (VLSS…AFIV), and 457 to 472 (TFAL…HGAR).

The protein belongs to the PsbB/PsbC family. PsbB subfamily. In terms of assembly, PSII is composed of 1 copy each of membrane proteins PsbA, PsbB, PsbC, PsbD, PsbE, PsbF, PsbH, PsbI, PsbJ, PsbK, PsbL, PsbM, PsbT, PsbX, PsbY, PsbZ, Psb30/Ycf12, at least 3 peripheral proteins of the oxygen-evolving complex and a large number of cofactors. It forms dimeric complexes. Binds multiple chlorophylls. PSII binds additional chlorophylls, carotenoids and specific lipids. is required as a cofactor.

It localises to the plastid. Its subcellular location is the chloroplast thylakoid membrane. Its function is as follows. One of the components of the core complex of photosystem II (PSII). It binds chlorophyll and helps catalyze the primary light-induced photochemical processes of PSII. PSII is a light-driven water:plastoquinone oxidoreductase, using light energy to abstract electrons from H(2)O, generating O(2) and a proton gradient subsequently used for ATP formation. The protein is Photosystem II CP47 reaction center protein of Pinus thunbergii (Japanese black pine).